The sequence spans 786 residues: Endonuclease MutS2 (786 aa).

Position 332-339 (332-339) interacts with ATP; it reads GPNTGGKT. Positions 711–786 constitute a Smr domain; it reads IDLRGMDSEE…GTGVTVVILK (76 aa).

This sequence belongs to the DNA mismatch repair MutS family. MutS2 subfamily. As to quaternary structure, homodimer. Binds to stalled ribosomes, contacting rRNA.

Endonuclease that is involved in the suppression of homologous recombination and thus may have a key role in the control of bacterial genetic diversity. Its function is as follows. Acts as a ribosome collision sensor, splitting the ribosome into its 2 subunits. Detects stalled/collided 70S ribosomes which it binds and splits by an ATP-hydrolysis driven conformational change. Acts upstream of the ribosome quality control system (RQC), a ribosome-associated complex that mediates the extraction of incompletely synthesized nascent chains from stalled ribosomes and their subsequent degradation. Probably generates substrates for RQC. The protein is Endonuclease MutS2 of Clostridium perfringens (strain 13 / Type A).